The following is a 541-amino-acid chain: Glutamyl-tRNA(Gln) amidotransferase subunit B, mitochondrial (541 aa).

It belongs to the GatB/GatE family. GatB subfamily. In terms of assembly, subunit of the heterotrimeric GatFAB amidotransferase (AdT) complex, composed of A, B and F subunits.

It localises to the mitochondrion. It carries out the reaction L-glutamyl-tRNA(Gln) + L-glutamine + ATP + H2O = L-glutaminyl-tRNA(Gln) + L-glutamate + ADP + phosphate + H(+). Functionally, allows the formation of correctly charged Gln-tRNA(Gln) through the transamidation of misacylated Glu-tRNA(Gln) in the mitochondria. The reaction takes place in the presence of glutamine and ATP through an activated gamma-phospho-Glu-tRNA(Gln). The polypeptide is Glutamyl-tRNA(Gln) amidotransferase subunit B, mitochondrial (Saccharomyces cerevisiae (strain RM11-1a) (Baker's yeast)).